The following is a 461-amino-acid chain: Cysteine--tRNA ligase (461 aa).

Cys-28 is a binding site for Zn(2+). The 'HIGH' region motif lies at 30–40 (ITVYDLCHIGH). The Zn(2+) site is built by Cys-209, His-234, and Glu-238. The short motif at 266-270 (KMSKS) is the 'KMSKS' region element. Residue Lys-269 participates in ATP binding.

It belongs to the class-I aminoacyl-tRNA synthetase family. As to quaternary structure, monomer. Zn(2+) is required as a cofactor.

It localises to the cytoplasm. The catalysed reaction is tRNA(Cys) + L-cysteine + ATP = L-cysteinyl-tRNA(Cys) + AMP + diphosphate. This Escherichia coli O127:H6 (strain E2348/69 / EPEC) protein is Cysteine--tRNA ligase.